We begin with the raw amino-acid sequence, 481 residues long: UDP-glucose 6-dehydrogenase 1 (481 aa).

Residues 8 to 13 (GAGYVG), Asp-33, Arg-38, 86 to 90 (VNTPT), 127 to 128 (ST), and Glu-161 each bind NAD(+). Substrate-binding positions include 157 to 161 (EFLAE), 216 to 223 (KLAANAFL), and 256 to 269 (RIGP…VGFG). Cys-272 acts as the Nucleophile in catalysis. Residue 272-275 (CFQK) participates in NAD(+) binding. 334–335 (FK) is a binding site for substrate. An NAD(+)-binding site is contributed by Arg-342. Residue Arg-448 coordinates substrate.

Belongs to the UDP-glucose/GDP-mannose dehydrogenase family.

It carries out the reaction UDP-alpha-D-glucose + 2 NAD(+) + H2O = UDP-alpha-D-glucuronate + 2 NADH + 3 H(+). It functions in the pathway nucleotide-sugar biosynthesis; UDP-alpha-D-glucuronate biosynthesis; UDP-alpha-D-glucuronate from UDP-alpha-D-glucose: step 1/1. Its activity is regulated as follows. Inhibited by UDP-xylose. In terms of biological role, involved in the biosynthesis of UDP-glucuronic acid (UDP-GlcA), providing nucleotide sugars for cell-wall polymers. This is UDP-glucose 6-dehydrogenase 1 (UGD1) from Arabidopsis thaliana (Mouse-ear cress).